Reading from the N-terminus, the 274-residue chain is Beta-lactamase OXA-9 (274 aa).

The first 24 residues, 1 to 24 (MKKILLLHMLVFVSATLPISSVAS), serve as a signal peptide directing secretion. Serine 58 serves as the catalytic Acyl-ester intermediate. Lysine 61 carries the N6-carboxylysine modification. 206–208 (KSG) provides a ligand contact to substrate.

It belongs to the class-D beta-lactamase family.

The catalysed reaction is a beta-lactam + H2O = a substituted beta-amino acid. Functionally, oxacillin-hydrolyzing beta-lactamase. Confers resistance to beta-lactam antibiotics but at a significantly lower level than the TEM bla gene product. The chain is Beta-lactamase OXA-9 (bla) from Klebsiella aerogenes (Enterobacter aerogenes).